Reading from the N-terminus, the 465-residue chain is Pancreatic triacylglycerol lipase (465 aa).

An N-terminal signal peptide occupies residues 1 to 16 (MLLLWALPLLLGAVAG). Cystine bridges form between Cys-20-Cys-26 and Cys-108-Cys-119. Ser-170 acts as the Nucleophile in catalysis. The Charge relay system role is filled by Asp-194. Residues Glu-205, Arg-208, Asp-210, and Asp-213 each contribute to the Ca(2+) site. Cys-255 and Cys-279 are joined by a disulfide. The active-site Charge relay system is the His-281. Disulfide bonds link Cys-303–Cys-314, Cys-317–Cys-321, and Cys-449–Cys-465. The region spanning 355 to 465 (WRYQVAVTLS…EDILLTLTPC (111 aa)) is the PLAT domain.

The protein belongs to the AB hydrolase superfamily. Lipase family. Forms a 1:1 stoichiometric complex with (pro)colipase/CLPS.

The protein localises to the secreted. It carries out the reaction a triacylglycerol + H2O = a diacylglycerol + a fatty acid + H(+). The enzyme catalyses 1,2,3-tributanoylglycerol + H2O = dibutanoylglycerol + butanoate + H(+). It catalyses the reaction 1,2,3-tri-(9Z-octadecenoyl)-glycerol + H2O = di-(9Z)-octadecenoylglycerol + (9Z)-octadecenoate + H(+). The catalysed reaction is all-trans-retinyl hexadecanoate + H2O = all-trans-retinol + hexadecanoate + H(+). It carries out the reaction 1,2-di-(9Z-octadecenoyl)-glycerol + H2O = (9Z-octadecenoyl)-glycerol + (9Z)-octadecenoate + H(+). With respect to regulation, inhibited by bile salts, is reactivated by (pro)colipase/CLPS. Its function is as follows. Plays an important role in fat metabolism. It preferentially splits the esters of long-chain fatty acids at positions 1 and 3, producing mainly 2-monoacylglycerol and free fatty acids, and shows considerably higher activity against insoluble emulsified substrates than against soluble ones. The sequence is that of Pancreatic triacylglycerol lipase (PNLIP) from Oryctolagus cuniculus (Rabbit).